The following is a 190-amino-acid chain: Elongation factor P-like protein (190 aa).

It belongs to the elongation factor P family.

This Photorhabdus laumondii subsp. laumondii (strain DSM 15139 / CIP 105565 / TT01) (Photorhabdus luminescens subsp. laumondii) protein is Elongation factor P-like protein.